The primary structure comprises 102 residues: EPIDERMAL PATTERNING FACTOR-like protein 9 (102 aa).

The N-terminal stretch at 1-31 (MKHEMMNIKPRCITIFFLLFALLLGNYVVQA) is a signal peptide. Intrachain disulfides connect Cys-65-Cys-98, Cys-70-Cys-77, and Cys-73-Cys-100.

The protein belongs to the plant cysteine rich small secretory peptide family. Epidermal patterning factor subfamily. Interacts with ERECTA and TMM. As to expression, expressed in immature organs, including leaves, stems and flower buds, but not in roots, shoot apical meristem and petals. Detected in the mesophyll tissues but not in the epidermal tissues where stomata develop.

It localises to the secreted. It is found in the extracellular space. The protein resides in the apoplast. Positively regulates stomatal density and patterning. Acts by competing with EPF2 (AC Q8LC53) for the same receptors, ERECTA (AC Q42371) and TMM (AC Q9SSD1). Not cleaved by the protease CRSP (AC Q9LNU1). The polypeptide is EPIDERMAL PATTERNING FACTOR-like protein 9 (Arabidopsis thaliana (Mouse-ear cress)).